The primary structure comprises 129 residues: Phosphoribosyl-AMP cyclohydrolase (129 aa).

D76 is a Mg(2+) binding site. Position 77 (C77) interacts with Zn(2+). Residues D78 and D80 each contribute to the Mg(2+) site. Positions 97 and 104 each coordinate Zn(2+).

This sequence belongs to the PRA-CH family. Homodimer. The cofactor is Mg(2+). Requires Zn(2+) as cofactor.

It localises to the cytoplasm. It carries out the reaction 1-(5-phospho-beta-D-ribosyl)-5'-AMP + H2O = 1-(5-phospho-beta-D-ribosyl)-5-[(5-phospho-beta-D-ribosylamino)methylideneamino]imidazole-4-carboxamide. The protein operates within amino-acid biosynthesis; L-histidine biosynthesis; L-histidine from 5-phospho-alpha-D-ribose 1-diphosphate: step 3/9. Functionally, catalyzes the hydrolysis of the adenine ring of phosphoribosyl-AMP. This chain is Phosphoribosyl-AMP cyclohydrolase, found in Verminephrobacter eiseniae (strain EF01-2).